We begin with the raw amino-acid sequence, 218 residues long: Guanylate kinase (218 aa).

Residues 14-193 (GLMLVLSSPS…AFAEVRGIVV (180 aa)) form the Guanylate kinase-like domain. An ATP-binding site is contributed by 21-28 (SPSGAGKS).

Belongs to the guanylate kinase family.

Its subcellular location is the cytoplasm. It carries out the reaction GMP + ATP = GDP + ADP. In terms of biological role, essential for recycling GMP and indirectly, cGMP. This chain is Guanylate kinase (gmk), found in Mesorhizobium japonicum (strain LMG 29417 / CECT 9101 / MAFF 303099) (Mesorhizobium loti (strain MAFF 303099)).